The following is an 809-amino-acid chain: MEAEGSSAPARAGSGEGSDSAGGATLKAPKHLWRHEQHHQYPLRQPQFRLLHPHHHLPPPPPPSPQPQPQCPLQPPPPPPLPPPPPPPGAARGRYASSGATGRVRHRGYSDTERYLYCRAMDRTSYAVETGHRPGLKKSRMSWPSSFQGLRRFDVDNGTSAGRSPLDPMTSPGSGLILQANFVHSQRRESFLYRSDSDYDLSPKSMSRNSSIASDIHGDDLIVTPFAQVLASLRTVRNNFAALTNLQDRAPSKRSPMCNQPSINKATITEEAYQKLASETLEELDWCLDQLETLQTRHSVSEMASNKFKRMLNRELTHLSEMSRSGNQVSEFISNTFLDKQHEVEIPSPTQKEKEKKKRPMSQISGVKKLMHSSSLTNSSIPRFGVKTEQEDVLAKELEDVNKWGLHVFRIAELSGNRPLTVIMHTIFQERDLLKTFKIPVDTLITYLMTLEDHYHADVAYHNNIHAADVVQSTHVLLSTPALEAVFTDLEILAAIFASAIHDVDHPGVSNQFLINTNSELALMYNDSSVLENHHLAVGFKLLQEENCDIFQNLTKKQRQSLRKMVIDIVLATDMSKHMNLLADLKTMVETKKVTSSGVLLLDNYSDRIQVLQNMVHCADLSNPTKPLQLYRQWTDRIMEEFFRQGDRERERGMEISPMCDKHNASVEKSQVGFIDYIVHPLWETWADLVHPDAQDILDTLEDNREWYQSTIPQSPSPAPDDPEEGRQGQTEKFQFELTLEEDGESDTEKDSGSQVEEDTSCSDSKTLCTQDSESTEIPLDEQVEEEAVGEEEESQPEACVIDDRSPDT.

The tract at residues 1 to 107 (MEAEGSSAPA…SGATGRVRHR (107 aa)) is disordered. Residues His54, Pro59, and Pro63 each carry the phosphoserine modification. Positions 58 to 89 (PPPPPPSPQPQPQCPLQPPPPPPLPPPPPPPG) are enriched in pro residues. Positions 90-102 (AARGRYASSGATG) are enriched in low complexity. A phosphoserine mark is found at Ser142, Ser299, Ser301, Ser348, and Ser375. The disordered stretch occupies residues 343–364 (EVEIPSPTQKEKEKKKRPMSQI). The PDEase domain maps to 386 to 715 (VKTEQEDVLA…EWYQSTIPQS (330 aa)). Lys387 is covalently cross-linked (Glycyl lysine isopeptide (Lys-Gly) (interchain with G-Cter in SUMO)). The active-site Proton donor is His462. 3',5'-cyclic AMP is bound at residue His462. Residue His462 participates in AMP binding. Zn(2+) is bound by residues His466, His502, Asp503, and Asp620. Positions 503, 620, 623, 671, and 674 each coordinate AMP. Position 503 (Asp503) interacts with Mg(2+). Position 503 (Asp503) interacts with Mn(2+). Gln671 and Phe674 together coordinate 3',5'-cyclic AMP. 2 disordered regions span residues 710–729 (STIP…GRQG) and 739–809 (TLEE…SPDT). The segment covering 762–773 (CSDSKTLCTQDS) has biased composition (polar residues). Over residues 779–796 (PLDEQVEEEAVGEEEESQ) the composition is skewed to acidic residues.

The protein belongs to the cyclic nucleotide phosphodiesterase family. PDE4 subfamily. Homodimer for the long isoforms. Isoforms with truncated N-termini are monomeric. Isoform 3 is part of a ternary complex containing PRKAR2A, PRKAR2B and AKAP9. Interacts with PDE4DIP. Identified in a complex composed of RYR1, PDE4D, PKA, FKBP1A and protein phosphatase 1 (PP1). Isoform 5, isoform N3 and isoform 12 bind RACK1 via their unique N-terminus. Binds ARRB2. Interacts (via N-terminal region) with SHANK2 (via proline-rich region); the interaction is increased in a PKA-dependent manner. The cofactor is Zn(2+). It depends on Mg(2+) as a cofactor. Mn(2+) serves as cofactor. In terms of processing, long isoforms that share a conserved PKA phosphorylation site in the N-terminus are activated by PKA through phosphorylation. Isoform 3 and isoform 7 are activated by phosphorylation (in vitro), but not isoform 6. Isoform N3 and isoform 12 are phosphorylated on Ser-49, Ser-51, Ser-55 and Ser-59. Post-translationally, sumoylation of long isoforms by PIAS4 augments their activation by PKA phosphorylation and represses their inhibition by ERK phosphorylation. As to expression, expressed in colonic epithelial cells (at protein level). Widespread; most abundant in skeletal muscle. Detected in brain. In terms of tissue distribution, detected in brain, placenta, lung and kidney. As to expression, detected in heart and skeletal muscle.

Its subcellular location is the apical cell membrane. The protein localises to the cytoplasm. It is found in the membrane. It localises to the cytoskeleton. The protein resides in the microtubule organizing center. Its subcellular location is the centrosome. It catalyses the reaction 3',5'-cyclic AMP + H2O = AMP + H(+). It participates in purine metabolism; 3',5'-cyclic AMP degradation; AMP from 3',5'-cyclic AMP: step 1/1. Inhibited by rolipram. Activated by phosphatidic acid. In terms of biological role, hydrolyzes the second messenger cAMP, which is a key regulator of many important physiological processes. The sequence is that of 3',5'-cyclic-AMP phosphodiesterase 4D from Homo sapiens (Human).